A 242-amino-acid chain; its full sequence is Uridylate kinase (242 aa).

15–18 (KLSG) is an ATP binding site. Residues 23-28 (GDEGFG) form an involved in allosteric activation by GTP region. Position 57 (Gly57) interacts with UMP. Gly58 and Arg62 together coordinate ATP. UMP contacts are provided by residues Asp77 and 138-145 (TGNPFCTT). 3 residues coordinate ATP: Thr165, Tyr171, and Asp174.

The protein belongs to the UMP kinase family. Homohexamer.

The protein resides in the cytoplasm. The catalysed reaction is UMP + ATP = UDP + ADP. It participates in pyrimidine metabolism; CTP biosynthesis via de novo pathway; UDP from UMP (UMPK route): step 1/1. Allosterically activated by GTP. Inhibited by UTP. In terms of biological role, catalyzes the reversible phosphorylation of UMP to UDP. This Shewanella sp. (strain ANA-3) protein is Uridylate kinase.